The sequence spans 145 residues: Ribonuclease VapC48 (145 aa).

2 residues coordinate Mg(2+): D6 and D109. The 127-residue stretch at 15-141 (HRASPFHDKA…RKFEGIRIRD (127 aa)) folds into the PINc domain.

This sequence belongs to the PINc/VapC protein family. The cofactor is Mg(2+).

Its function is as follows. Toxic component of a type II toxin-antitoxin (TA) system. An RNase. Its cognate antitoxin is VapB48. The protein is Ribonuclease VapC48 of Mycobacterium tuberculosis (strain CDC 1551 / Oshkosh).